A 1979-amino-acid polypeptide reads, in one-letter code: MSQKPLSDDEKFLFVDKNFVNNPLAQADWSAKKLVWVPSEKHGFEAASIKEEKGDEVTVELQENGKKVTLSKDDIQKMNPPKFSKVEDMAELTCLNEASVLHNLRERYFSGLIYTYSGLFCVVINPYKQLPIYSEKIIDMYKGKKRHEMPPHIYAIADTAYRSMLQDREDQSILCTGESGAGKTENTKKVIQYLAVVASSHKGKKDTSITQGPSFSYGELEKQLLQANPILEAFGNAKTVKNDNSSRFGKFIRINFDVTGYIVGANIETYLLEKSRAIRQAKDERTFHIFYYLIAGASEQMRNDLLLEGFNNYTFLSNGHVPIPAQQDDEMFQETLEAMTIMGFTEEEQTSILRVVSSVLQLGNIVFKKERNTDQASMPDNTAAQKVCHLMGINVTDFTRSILTPRIKVGRDVVQKAQTKEQADFAIEALAKAKFERLFRWILTRVNKALDKTKRQGASFLGILDIAGFEIFEINSFEQLCINYTNEKLQQLFNHTMFILEQEEYQREGIEWNFIDFGLDLQPCIELIERPTNPPGVLALLDEECWFPKATDTSFVEKLIQEQGNHAKFQKSKQLKDKTEFCILHYAGKVTYNASAWLTKNMDPLNDNVTSLLNQSSDKFVADLWKDVDRIVGLDQMAKMTESSLPSASKTKKGMFRTVGQLYKEQLTKLMTTLRNTNPNFVRCIIPNHEKRAGKLDAHLVLEQLRCNGVLEGIRICRQGFPNRIVFQEFRQRYEILAANAIPKGFMDGKQACILMIKALELDPNLYRIGQSKIFFRTGVLAHLEEERDLKITDVIIAFQAQCRGYLARKAFAKRQQQLTAMKVIQRNCAAYLKLRNWQWWRLFTKVKPLLQVTRQEEEMQAKDEELQRTKERQQKAEAELKELEQKHTQLCEEKNLLQEKLQAETELYAEAEEMRVRLAAKKQELEEILHEMEARIEEEEERSQQLQAEKKKMQQQMLDLEEQLEEEEAARQKLQLEKVTADGKIKKMEDDILIMEDQNNKLTKERKLLEERVSDLTTNLAEEEEKAKNLTKLKNKHESMISELEVRLKKEEKSRQELEKIKRKLEGESSDLHEQIAELQAQIAELKAQLAKKEEELQAALARLEDETSQKNNALKKIRELESHISDLQEDLESEKAARNKAEKQKRDLSEELEALKTELEDTLDTTATQQELRAKREQEVTVLKRALEEETRTHEAQVQEMRQKHTQAVEELTEQLEQFKRAKANLDKTKQTLEKDNADLANEIRSLSQAKQDVEHKKKKLEVQLQDLQSKYSDGERVRTELNEKVHKLQIEVENVTSLLNEAESKNIKLTKDVATLGSQLQDTQELLQEETRQKLNVTTKLRQLEDDKNSLQEQLDEEVEAKQNLERHISTLTIQLSDSKKKLQEFTATVETMEEGKKKLQREIESLTQQFEEKAASYDKLEKTKNRLQQELDDLVVDLDNQRQLVSNLEKKQKKFDQMLAEEKNISSKYADERDRAEAEAREKETKALSLARALEEALEAKEELERTNKMLKAEMEDLVSSKDDVGKNVHELEKSKRTLEQQVEEMKTQLEELEDELQAAEDAKLRLEVNMQAMKSQFERDLQARDEQNEEKRRQLLKQLHEHETELEDERKQRALAAAAKKKLEVDVKDLESQVDSANKAREEAIKQLRKLQAQMKDYQRDLDDARAAREEIFATARENEKKAKNLEAELIQLQEDLAAAERARKQADLEKEEMAEELASANSGRTSLQDEKRRLEARIAQLEEELDEEHSNIETMSDRMRKAVQQAEQLNNELATERATAQKNENARQQLERQNKELRSKLQEMEGAVKSKFKSTIAALEAKIASLEEQLEQEAREKQAAAKTLRQKDKKLKDALLQVEDERKQAEQYKDQAEKGNLRLKQLKRQLEEAEEESQRINANRRKLQRELDEATESNDALGREVAALKSKLRRGNEPVSFAPPRRSGGRRVIENATDGGEEEIDGRDGDFNGKASE.

At serine 2 the chain carries Blocked amino end (Ser). The Myosin N-terminal SH3-like domain maps to 30–80 (SAKKLVWVPSEKHGFEAASIKEEKGDEVTVELQENGKKVTLSKDDIQKMNP). The 706-residue stretch at 84–789 (SKVEDMAELT…VLAHLEEERD (706 aa)) folds into the Myosin motor domain. Lysine 128 is modified (N6,N6,N6-trimethyllysine). ATP is bound at residue 177–184 (GESGAGKT). 2 actin-binding regions span residues 667 to 689 (LTKL…IPNH) and 768 to 782 (RIGQ…GVLA). In terms of domain architecture, IQ spans 792–821 (ITDVIIAFQAQCRGYLARKAFAKRQQQLTA). Residues 850-1979 (LLQVTRQEEE…DGDFNGKASE (1130 aa)) form a rodlike tail (S2 and LMM domains) region. Residues 850-1979 (LLQVTRQEEE…DGDFNGKASE (1130 aa)) are a coiled coil. Disordered stretches follow at residues 1130–1150 (QEDL…KRDL), 1709–1736 (RKQA…LQDE), and 1891–1979 (QLEE…KASE). Over residues 1135-1150 (SEKAARNKAEKQKRDL) the composition is skewed to basic and acidic residues. Positions 1968–1979 (GRDGDFNGKASE) are enriched in basic and acidic residues.

The protein belongs to the TRAFAC class myosin-kinesin ATPase superfamily. Myosin family. In terms of assembly, muscle myosin is a hexameric protein that consists of 2 heavy chain subunits (MHC), 2 alkali light chain subunits (MLC) and 2 regulatory light chain subunits (MLC-2).

It is found in the cytoplasm. It localises to the myofibril. Its function is as follows. Muscle contraction. The protein is Myosin-11 (MYH11) of Gallus gallus (Chicken).